Reading from the N-terminus, the 251-residue chain is Leucine-rich repeat and calponin homology domain-containing protein 1 (251 aa).

Residues 73–97 (SNGSEYSPNEIRANSPAISPTANST) are disordered. Residues S87 and S91 each carry the phosphoserine modification. Polar residues predominate over residues 88–97 (PAISPTANST). At T123 the chain carries Phosphothreonine. Positions 131–244 (MREEKELVEH…ITVQALLDVT (114 aa)) constitute a Calponin-homology (CH) domain.

As to quaternary structure, interacts (via LRR repeats) with unphosphorylated DOCK8 (via DHR-2 domain); the interaction prevents the interaction between DOCK8 and CDC42.

The protein localises to the cytoplasm. Acts as a negative regulator of GTPase CDC42 by sequestering CDC42-guanine exchange factor DOCK8. Probably by preventing CDC42 activation, negatively regulates CD4(+) T-cell migration. The polypeptide is Leucine-rich repeat and calponin homology domain-containing protein 1 (Felis catus (Cat)).